A 225-amino-acid polypeptide reads, in one-letter code: 7-cyano-7-deazaguanine synthase (225 aa).

9 to 19 (YSGGLDSTTCL) contributes to the ATP binding site. The Zn(2+) site is built by Cys188, Cys198, Cys201, and Cys204.

It belongs to the QueC family. Zn(2+) serves as cofactor.

It catalyses the reaction 7-carboxy-7-deazaguanine + NH4(+) + ATP = 7-cyano-7-deazaguanine + ADP + phosphate + H2O + H(+). Its pathway is purine metabolism; 7-cyano-7-deazaguanine biosynthesis. Functionally, catalyzes the ATP-dependent conversion of 7-carboxy-7-deazaguanine (CDG) to 7-cyano-7-deazaguanine (preQ(0)). This Citrifermentans bemidjiense (strain ATCC BAA-1014 / DSM 16622 / JCM 12645 / Bem) (Geobacter bemidjiensis) protein is 7-cyano-7-deazaguanine synthase.